Here is a 242-residue protein sequence, read N- to C-terminus: Small ribosomal subunit protein eS6 (242 aa).

The segment covering 219-229 (EKKSEKAEEKK) has biased composition (basic and acidic residues). Residues 219 to 242 (EKKSEKAEEKKRRASSLRTQSVQA) form a disordered region. 2 positions are modified to phosphoserine: S233 and S234.

Belongs to the eukaryotic ribosomal protein eS6 family. In terms of processing, phosphorylated.

In Yarrowia lipolytica (strain CLIB 122 / E 150) (Yeast), this protein is Small ribosomal subunit protein eS6 (RPS6).